The chain runs to 546 residues: Chaperonin GroEL (546 aa).

Residues 29–32, K50, 86–90, G414, and D492 each bind ATP; these read TMGP and DGTTT.

The protein belongs to the chaperonin (HSP60) family. In terms of assembly, forms a cylinder of 14 subunits composed of two heptameric rings stacked back-to-back. Interacts with the co-chaperonin GroES.

It localises to the cytoplasm. It carries out the reaction ATP + H2O + a folded polypeptide = ADP + phosphate + an unfolded polypeptide.. Its function is as follows. Together with its co-chaperonin GroES, plays an essential role in assisting protein folding. The GroEL-GroES system forms a nano-cage that allows encapsulation of the non-native substrate proteins and provides a physical environment optimized to promote and accelerate protein folding. The chain is Chaperonin GroEL from Helicobacter pylori (strain G27).